The sequence spans 334 residues: Holliday junction branch migration complex subunit RuvB (334 aa).

Residues 1-181 (MQDRLISGTE…FGIVQRLEFY (181 aa)) form a large ATPase domain (RuvB-L) region. ATP contacts are provided by residues I20, R21, G62, K65, T66, T67, 128-130 (EDY), R171, Y181, and R218. A Mg(2+)-binding site is contributed by T66. The small ATPAse domain (RuvB-S) stretch occupies residues 182-252 (SVEDLTHIVS…MAQRALDMLN (71 aa)). The tract at residues 255–334 (KAGLDTLDRR…FGMTPPEPKN (80 aa)) is head domain (RuvB-H). Positions 310 and 315 each coordinate DNA.

The protein belongs to the RuvB family. In terms of assembly, homohexamer. Forms an RuvA(8)-RuvB(12)-Holliday junction (HJ) complex. HJ DNA is sandwiched between 2 RuvA tetramers; dsDNA enters through RuvA and exits via RuvB. An RuvB hexamer assembles on each DNA strand where it exits the tetramer. Each RuvB hexamer is contacted by two RuvA subunits (via domain III) on 2 adjacent RuvB subunits; this complex drives branch migration. In the full resolvosome a probable DNA-RuvA(4)-RuvB(12)-RuvC(2) complex forms which resolves the HJ.

Its subcellular location is the cytoplasm. It catalyses the reaction ATP + H2O = ADP + phosphate + H(+). The RuvA-RuvB-RuvC complex processes Holliday junction (HJ) DNA during genetic recombination and DNA repair, while the RuvA-RuvB complex plays an important role in the rescue of blocked DNA replication forks via replication fork reversal (RFR). RuvA specifically binds to HJ cruciform DNA, conferring on it an open structure. The RuvB hexamer acts as an ATP-dependent pump, pulling dsDNA into and through the RuvAB complex. RuvB forms 2 homohexamers on either side of HJ DNA bound by 1 or 2 RuvA tetramers; 4 subunits per hexamer contact DNA at a time. Coordinated motions by a converter formed by DNA-disengaged RuvB subunits stimulates ATP hydrolysis and nucleotide exchange. Immobilization of the converter enables RuvB to convert the ATP-contained energy into a lever motion, pulling 2 nucleotides of DNA out of the RuvA tetramer per ATP hydrolyzed, thus driving DNA branch migration. The RuvB motors rotate together with the DNA substrate, which together with the progressing nucleotide cycle form the mechanistic basis for DNA recombination by continuous HJ branch migration. Branch migration allows RuvC to scan DNA until it finds its consensus sequence, where it cleaves and resolves cruciform DNA. The polypeptide is Holliday junction branch migration complex subunit RuvB (Acinetobacter baumannii (strain AB307-0294)).